The primary structure comprises 228 residues: Probable septum site-determining protein MinC (228 aa).

This sequence belongs to the MinC family. As to quaternary structure, interacts with MinD and FtsZ.

Functionally, cell division inhibitor that blocks the formation of polar Z ring septums. Rapidly oscillates between the poles of the cell to destabilize FtsZ filaments that have formed before they mature into polar Z rings. Prevents FtsZ polymerization. The polypeptide is Probable septum site-determining protein MinC (Yersinia pseudotuberculosis serotype O:1b (strain IP 31758)).